We begin with the raw amino-acid sequence, 131 residues long: Small ribosomal subunit protein uS8 (131 aa).

This sequence belongs to the universal ribosomal protein uS8 family. As to quaternary structure, part of the 30S ribosomal subunit. Contacts proteins S5 and S12.

Functionally, one of the primary rRNA binding proteins, it binds directly to 16S rRNA central domain where it helps coordinate assembly of the platform of the 30S subunit. This is Small ribosomal subunit protein uS8 from Azobacteroides pseudotrichonymphae genomovar. CFP2.